We begin with the raw amino-acid sequence, 262 residues long: Thrombin-like enzyme calobin-1 (262 aa).

Positions 1-18 (MVLISVLANLLILQLSYA) are cleaved as a signal peptide. Positions 19–24 (QKSSEL) are excised as a propeptide. The 229-residue stretch at 25 to 253 (VIGGDECNIN…HLDWIQSIIA (229 aa)) folds into the Peptidase S1 domain. 6 disulfides stabilise this stretch: Cys31–Cys165, Cys52–Cys68, Cys100–Cys260, Cys144–Cys214, Cys176–Cys193, and Cys204–Cys229. The active-site Charge relay system is His67. Residue Asn105 is glycosylated (N-linked (GlcNAc...) asparagine). Asp112 acts as the Charge relay system in catalysis. Ser208 (charge relay system) is an active-site residue.

Belongs to the peptidase S1 family. Snake venom subfamily. Monomer. N-glycosylated. Expressed by the venom gland.

The protein resides in the secreted. Strongly inhibited by PMSF, and moderately by benzamidine and soybean trypsin inhibitor. Thrombin-like snake venom serine protease. Has a coagulant activity. Acts on alpha-chains of fibrinogen (FGA) generating fibrinopeptide A. This chain is Thrombin-like enzyme calobin-1, found in Gloydius ussuriensis (Ussuri mamushi).